The sequence spans 229 residues: 2,3-bisphosphoglycerate-dependent phosphoglycerate mutase (229 aa).

Substrate-binding positions include arginine 7 to asparagine 14, threonine 20 to glycine 21, arginine 59, glutamate 86 to tyrosine 89, lysine 97, arginine 113 to arginine 114, and glycine 182 to asparagine 183. Catalysis depends on histidine 8, which acts as the Tele-phosphohistidine intermediate. The active-site Proton donor/acceptor is glutamate 86.

Belongs to the phosphoglycerate mutase family. BPG-dependent PGAM subfamily.

The enzyme catalyses (2R)-2-phosphoglycerate = (2R)-3-phosphoglycerate. Its pathway is carbohydrate degradation; glycolysis; pyruvate from D-glyceraldehyde 3-phosphate: step 3/5. Its function is as follows. Catalyzes the interconversion of 2-phosphoglycerate and 3-phosphoglycerate. The chain is 2,3-bisphosphoglycerate-dependent phosphoglycerate mutase from Listeria welshimeri serovar 6b (strain ATCC 35897 / DSM 20650 / CCUG 15529 / CIP 8149 / NCTC 11857 / SLCC 5334 / V8).